We begin with the raw amino-acid sequence, 391 residues long: Multidrug resistance protein MdtL (391 aa).

At 1–3 (MSR) the chain is on the cytoplasmic side. The chain crosses the membrane as a helical span at residues 4 to 24 (FLICSFALVLLYPAGIDMYLV). Topologically, residues 25–41 (GLPRIAADLNASEAQLH) are periplasmic. The chain crosses the membrane as a helical span at residues 42 to 62 (IAFSVYLAGMAAAMLFAGKVA). Residues 63–68 (DRSGRK) are Cytoplasmic-facing. A helical membrane pass occupies residues 69–89 (PVAIPGAALFIIASVFCSLAE). Over 90-92 (TST) the chain is Periplasmic. A helical membrane pass occupies residues 93–113 (LFLAGRFLQGLGAGCCYVVAF). The Cytoplasmic segment spans residues 114–130 (AILRDTLDDRRRAKVLS). A helical transmembrane segment spans residues 131–151 (LLNGITCIIPVLAPVLGHLIM). The Periplasmic segment spans residues 152 to 157 (LKFPWQ). The chain crosses the membrane as a helical span at residues 158 to 178 (SLFWAMAMMGIAVLMLSLFIL). The Cytoplasmic portion of the chain corresponds to 179 to 202 (KETRPASPAASDKPRENSESLLNR). A helical transmembrane segment spans residues 203–222 (FFLSRVVITTLSVSVILTFV). Topologically, residues 223–244 (NTSPVLLMEIMGFERGEYATIM) are periplasmic. Residues 245 to 265 (ALTAGVSMTFSFSTPFALGIF) traverse the membrane as a helical segment. The Cytoplasmic segment spans residues 266 to 268 (KPR). Residues 269–289 (TLMITSQVLFLAAGITLAVSP) traverse the membrane as a helical segment. At 290–292 (SHA) the chain is on the periplasmic side. A helical transmembrane segment spans residues 293–313 (VSLFGITLICAGFSVGFGVAM). The Cytoplasmic segment spans residues 314-330 (SQALGPFSLRAGVASST). Residues 331–351 (LGIAQVCGSSLWIWLAAVVGI) form a helical membrane-spanning segment. Residues 352-355 (GAWN) lie on the Periplasmic side of the membrane. The chain crosses the membrane as a helical span at residues 356–376 (MLIGILIACSIVSLLLIMFVA). Over 377–391 (PGRPVAAHEEIHHHA) the chain is Cytoplasmic.

The protein belongs to the major facilitator superfamily. DHA1 family. MdtL (TC 2.A.1.2.22) subfamily.

It is found in the cell inner membrane. The polypeptide is Multidrug resistance protein MdtL (mdtL) (Shigella flexneri).